The sequence spans 420 residues: Imidazolonepropionase (420 aa).

Fe(3+)-binding residues include His-77 and His-79. Zn(2+) is bound by residues His-77 and His-79. Residues Arg-86, Tyr-149, and His-182 each coordinate 4-imidazolone-5-propanoate. Tyr-149 provides a ligand contact to N-formimidoyl-L-glutamate. His-245 serves as a coordination point for Fe(3+). His-245 is a Zn(2+) binding site. Position 248 (Glu-248) interacts with 4-imidazolone-5-propanoate. Fe(3+) is bound at residue Asp-319. Asp-319 is a Zn(2+) binding site. Asn-321 contributes to the N-formimidoyl-L-glutamate binding site.

It belongs to the metallo-dependent hydrolases superfamily. HutI family. It depends on Zn(2+) as a cofactor. The cofactor is Fe(3+).

It is found in the cytoplasm. It catalyses the reaction 4-imidazolone-5-propanoate + H2O = N-formimidoyl-L-glutamate. The protein operates within amino-acid degradation; L-histidine degradation into L-glutamate; N-formimidoyl-L-glutamate from L-histidine: step 3/3. Functionally, catalyzes the hydrolytic cleavage of the carbon-nitrogen bond in imidazolone-5-propanoate to yield N-formimidoyl-L-glutamate. It is the third step in the universal histidine degradation pathway. The chain is Imidazolonepropionase from Haloarcula marismortui (strain ATCC 43049 / DSM 3752 / JCM 8966 / VKM B-1809) (Halobacterium marismortui).